The primary structure comprises 311 residues: Pyrimidine-specific ribonucleoside hydrolase RihA (311 aa).

His240 is a catalytic residue.

The protein belongs to the IUNH family. RihA subfamily.

Functionally, hydrolyzes cytidine or uridine to ribose and cytosine or uracil, respectively. The sequence is that of Pyrimidine-specific ribonucleoside hydrolase RihA from Salmonella arizonae (strain ATCC BAA-731 / CDC346-86 / RSK2980).